We begin with the raw amino-acid sequence, 458 residues long: UDP-N-acetylglucosamine 1-carboxyvinyltransferase (458 aa).

Residue 34 to 35 (KN) coordinates phosphoenolpyruvate. A UDP-N-acetyl-alpha-D-glucosamine-binding site is contributed by Arg-104. Catalysis depends on Cys-128, which acts as the Proton donor. 2-(S-cysteinyl)pyruvic acid O-phosphothioketal is present on Cys-128. UDP-N-acetyl-alpha-D-glucosamine-binding residues include Asp-319 and Ile-341.

Belongs to the EPSP synthase family. MurA subfamily.

The protein localises to the cytoplasm. It carries out the reaction phosphoenolpyruvate + UDP-N-acetyl-alpha-D-glucosamine = UDP-N-acetyl-3-O-(1-carboxyvinyl)-alpha-D-glucosamine + phosphate. It functions in the pathway cell wall biogenesis; peptidoglycan biosynthesis. Functionally, cell wall formation. Adds enolpyruvyl to UDP-N-acetylglucosamine. This is UDP-N-acetylglucosamine 1-carboxyvinyltransferase from Prochlorococcus marinus (strain MIT 9515).